Reading from the N-terminus, the 1069-residue chain is Thyrotropin-releasing hormone-degrading ectoenzyme (1069 aa).

Acidic residues predominate over residues 1-11 (MALDGELGEQE). Residues 1–46 (MALDGELGEQEEEKKKKKKKKRKKKKEEEEEEEGAEKSSSPFAAAM) are disordered. At 1 to 85 (MALDGELGEQ…ERHIAVHKRL (85 aa)) the chain is on the cytoplasmic side. Over residues 15–25 (KKKKKKKRKKK) the composition is skewed to basic residues. A helical; Signal-anchor for type II membrane protein transmembrane segment spans residues 86-106 (VLAFAVSLVALLAVTMLAVLL). Residues 107–1069 (SLRFDECGAS…FQWLGKALRH (963 aa)) are Extracellular-facing. The tract at residues 117-179 (ATPGADGGPS…PSEEEREPWE (63 aa)) is disordered. Gly residues predominate over residues 121 to 136 (ADGGPSGFPERGGNGS). N-linked (GlcNAc...) asparagine glycosylation is found at asparagine 134, asparagine 205, asparagine 220, asparagine 267, and asparagine 383. Position 449–453 (449–453 (AAMEN)) interacts with substrate. Histidine 485 is a Zn(2+) binding site. The active-site Proton acceptor is the glutamate 486. Zn(2+) contacts are provided by histidine 489 and glutamate 508. Residues asparagine 650, asparagine 679, asparagine 694, asparagine 708, asparagine 729, asparagine 845, and asparagine 951 are each glycosylated (N-linked (GlcNAc...) asparagine).

It belongs to the peptidase M1 family. In terms of assembly, homodimer; disulfide-linked. Requires Zn(2+) as cofactor. Predominantly expressed in brain.

It is found in the membrane. It catalyses the reaction Release of the N-terminal pyroglutamyl group from pGlu-|-His-Xaa tripeptides and pGlu-|-His-Xaa-Gly tetrapeptides.. Its function is as follows. Specific inactivation of TRH after its release. The polypeptide is Thyrotropin-releasing hormone-degrading ectoenzyme (TRHDE) (Homo sapiens (Human)).